We begin with the raw amino-acid sequence, 1013 residues long: GTPase-activating protein BEM3 (1013 aa).

Disordered regions lie at residues 90-197 (TVVE…GSPA), 258-277 (GSRY…PESI), 282-301 (SDLQ…TDLG), and 307-421 (VDTT…HQSK). A compositionally biased stretch (polar residues) spans 143–160 (QEATSGAQQVPLLTSSKS). Composition is skewed to polar residues over residues 309–319 (TTFNAEDNPTG), 333–388 (TLQN…TSSN), and 404–418 (KSYS…SNSH). The region spanning 555 to 662 (EFAKEGMLLV…WISVLTTLCD (108 aa)) is the PH domain. A disordered region spans residues 702–726 (AMDATSPTRPNDPNPVSLTSEEEKE). Residues 706–720 (TSPTRPNDPNPVSLT) show a composition bias toward polar residues. Positions 799–1013 (LQLSSHPYQG…PPVNIHIPQI (215 aa)) constitute a Rho-GAP domain.

It is found in the cytoplasm. GTPase-activating protein (GAP) for CDC42 and less efficiently for RHO1. Negative regulator of the pheromone-response pathway through the STE20 protein kinase. The polypeptide is GTPase-activating protein BEM3 (BEM3) (Eremothecium gossypii (strain ATCC 10895 / CBS 109.51 / FGSC 9923 / NRRL Y-1056) (Yeast)).